An 87-amino-acid chain; its full sequence is Small ribosomal subunit protein bS20 (87 aa).

Positions 1–15 (MANHKSAAKRARQSI) are enriched in basic residues. A disordered region spans residues 1–29 (MANHKSAAKRARQSIRKTAVNNARKSTVK). Positions 19–29 (AVNNARKSTVK) are enriched in polar residues.

This sequence belongs to the bacterial ribosomal protein bS20 family.

Binds directly to 16S ribosomal RNA. In Bdellovibrio bacteriovorus (strain ATCC 15356 / DSM 50701 / NCIMB 9529 / HD100), this protein is Small ribosomal subunit protein bS20.